A 58-amino-acid chain; its full sequence is Large ribosomal subunit protein bL32c (58 aa).

It belongs to the bacterial ribosomal protein bL32 family.

It localises to the plastid. Its subcellular location is the chloroplast. This Chaetosphaeridium globosum (Charophycean green alga) protein is Large ribosomal subunit protein bL32c.